A 114-amino-acid chain; its full sequence is UPF0102 protein Amet_2739 (114 aa).

The protein belongs to the UPF0102 family.

This Alkaliphilus metalliredigens (strain QYMF) protein is UPF0102 protein Amet_2739.